We begin with the raw amino-acid sequence, 389 residues long: S-adenosylmethionine synthase (389 aa).

Histidine 17 contacts ATP. Aspartate 19 is a Mg(2+) binding site. Residue glutamate 45 participates in K(+) binding. L-methionine is bound by residues glutamate 58 and glutamine 101. Residues 101 to 111 (QSPDISQGVTE) form a flexible loop region. ATP-binding positions include 168 to 170 (DSK), 234 to 235 (RF), aspartate 243, 249 to 250 (RK), alanine 266, and lysine 270. Aspartate 243 is a binding site for L-methionine. An L-methionine-binding site is contributed by lysine 274.

Belongs to the AdoMet synthase family. As to quaternary structure, homotetramer; dimer of dimers. It depends on Mg(2+) as a cofactor. Requires K(+) as cofactor.

The protein resides in the cytoplasm. It catalyses the reaction L-methionine + ATP + H2O = S-adenosyl-L-methionine + phosphate + diphosphate. The protein operates within amino-acid biosynthesis; S-adenosyl-L-methionine biosynthesis; S-adenosyl-L-methionine from L-methionine: step 1/1. Its function is as follows. Catalyzes the formation of S-adenosylmethionine (AdoMet) from methionine and ATP. The overall synthetic reaction is composed of two sequential steps, AdoMet formation and the subsequent tripolyphosphate hydrolysis which occurs prior to release of AdoMet from the enzyme. The sequence is that of S-adenosylmethionine synthase from Syntrophotalea carbinolica (strain DSM 2380 / NBRC 103641 / GraBd1) (Pelobacter carbinolicus).